Reading from the N-terminus, the 291-residue chain is Segregation and condensation protein B (291 aa).

The protein belongs to the ScpB family. Homodimer. Homodimerization may be required to stabilize the binding of ScpA to the Smc head domains. Component of a cohesin-like complex composed of ScpA, ScpB and the Smc homodimer, in which ScpA and ScpB bind to the head domain of Smc. The presence of the three proteins is required for the association of the complex with DNA.

The protein localises to the cytoplasm. Functionally, participates in chromosomal partition during cell division. May act via the formation of a condensin-like complex containing Smc and ScpA that pull DNA away from mid-cell into both cell halves. This is Segregation and condensation protein B from Mycoplasmoides gallisepticum (strain R(low / passage 15 / clone 2)) (Mycoplasma gallisepticum).